The primary structure comprises 413 residues: PCI domain-containing protein 2 homolog (413 aa).

The PCI domain occupies 222-403; the sequence is VAYNYFLGRK…QKLVISKTNA (182 aa).

The protein belongs to the CSN12 family.

This chain is PCI domain-containing protein 2 homolog, found in Caenorhabditis briggsae.